Consider the following 275-residue polypeptide: 3-methyl-2-oxobutanoate hydroxymethyltransferase (275 aa).

The Mg(2+) site is built by aspartate 55 and aspartate 94. 3-methyl-2-oxobutanoate-binding positions include 55-56 (DS), aspartate 94, and lysine 122. Position 124 (glutamate 124) interacts with Mg(2+). Glutamate 191 serves as the catalytic Proton acceptor.

It belongs to the PanB family. In terms of assembly, homodecamer; pentamer of dimers. Mg(2+) is required as a cofactor.

The protein localises to the cytoplasm. The catalysed reaction is 3-methyl-2-oxobutanoate + (6R)-5,10-methylene-5,6,7,8-tetrahydrofolate + H2O = 2-dehydropantoate + (6S)-5,6,7,8-tetrahydrofolate. The protein operates within cofactor biosynthesis; (R)-pantothenate biosynthesis; (R)-pantoate from 3-methyl-2-oxobutanoate: step 1/2. Its function is as follows. Catalyzes the reversible reaction in which hydroxymethyl group from 5,10-methylenetetrahydrofolate is transferred onto alpha-ketoisovalerate to form ketopantoate. The protein is 3-methyl-2-oxobutanoate hydroxymethyltransferase of Marinomonas sp. (strain MWYL1).